A 90-amino-acid chain; its full sequence is Small ribosomal subunit protein uS19 (90 aa).

Belongs to the universal ribosomal protein uS19 family.

In terms of biological role, protein S19 forms a complex with S13 that binds strongly to the 16S ribosomal RNA. This is Small ribosomal subunit protein uS19 from Nitrosococcus oceani (strain ATCC 19707 / BCRC 17464 / JCM 30415 / NCIMB 11848 / C-107).